The primary structure comprises 287 residues: Protease HtpX (287 aa).

Transmembrane regions (helical) follow at residues isoleucine 4–isoleucine 24 and glycine 33–isoleucine 53. Residue histidine 139 participates in Zn(2+) binding. Glutamate 140 is a catalytic residue. Histidine 143 serves as a coordination point for Zn(2+). A run of 2 helical transmembrane segments spans residues leucine 154–isoleucine 174 and alanine 195–phenylalanine 215. Glutamate 220 is a binding site for Zn(2+).

The protein belongs to the peptidase M48B family. Zn(2+) is required as a cofactor.

The protein localises to the cell inner membrane. The sequence is that of Protease HtpX from Shewanella putrefaciens (strain CN-32 / ATCC BAA-453).